The chain runs to 318 residues: Cell surface sensor SHO1 (318 aa).

The disordered stretch occupies residues 1-23 (MPSYGSLHSPSLRKMEHSRGQYG). At 1 to 38 (MPSYGSLHSPSLRKMEHSRGQYGGGRKGMSLGNVIGDP) the chain is on the cytoplasmic side. Residues 39–59 (FALATISIAGLAWLIAFIASI) form a helical membrane-spanning segment. The Extracellular portion of the chain corresponds to 60–71 (VAQIQTTQGFPT). A helical membrane pass occupies residues 72–92 (YTWWTVVFYFFLIPGVFVVVA). The Cytoplasmic portion of the chain corresponds to 93–100 (SDTIQTYH). Residues 101–121 (VALVGYMACGLVLTTSSVNGL) traverse the membrane as a helical segment. Residues 122–130 (VYSTNGAKE) are Extracellular-facing. The chain crosses the membrane as a helical span at residues 131–151 (AAAAGFILLSMVTIVWIFYFG). Over 152 to 318 (SAPSAMPRAY…IAPSNYLILL (167 aa)) the chain is Cytoplasmic. A disordered region spans residues 172-255 (TSNNRQTMTG…AGGAADAEIV (84 aa)). A compositionally biased stretch (polar residues) spans 190–214 (ETSTSVQPPQMYTSAQLNGFENPSP). A compositionally biased stretch (low complexity) spans 237–250 (GLPKTTTPPAGGAA). Residues 259–318 (EYPYRAKAIYTYEANPDDANEISFSKHEILEVSDVSGRWWQARKETGETGIAPSNYLILL) enclose the SH3 domain.

It belongs to the SHO1 family. In terms of assembly, forms homooligomers.

It localises to the cell membrane. In terms of biological role, MSB2 and SHO1 have overlapping functions in recognizing various surface signals for MAPK PMK1 activation and appressorium formation. While MSB2 is critical for sensing surface hydrophobicity and cutin monomers, SHO1 may play a more important role in recognizing rice leaf waxes. The protein is Cell surface sensor SHO1 of Pyricularia oryzae (strain 70-15 / ATCC MYA-4617 / FGSC 8958) (Rice blast fungus).